The primary structure comprises 403 residues: S-adenosylmethionine synthase (403 aa).

His16 lines the ATP pocket. Position 18 (Asp18) interacts with Mg(2+). Glu44 provides a ligand contact to K(+). The L-methionine site is built by Glu57 and Gln100. The segment at Gln100 to Arg110 is flexible loop. ATP contacts are provided by residues Asp165–Lys167, Asp242, Arg248–Lys249, Ala265, and Lys269. Asp242 is an L-methionine binding site. Lys273 contacts L-methionine.

The protein belongs to the AdoMet synthase family. As to quaternary structure, homotetramer; dimer of dimers. Requires Mg(2+) as cofactor. The cofactor is K(+).

It localises to the cytoplasm. The catalysed reaction is L-methionine + ATP + H2O = S-adenosyl-L-methionine + phosphate + diphosphate. The protein operates within amino-acid biosynthesis; S-adenosyl-L-methionine biosynthesis; S-adenosyl-L-methionine from L-methionine: step 1/1. Its function is as follows. Catalyzes the formation of S-adenosylmethionine (AdoMet) from methionine and ATP. The overall synthetic reaction is composed of two sequential steps, AdoMet formation and the subsequent tripolyphosphate hydrolysis which occurs prior to release of AdoMet from the enzyme. This Nitrosococcus oceani (strain ATCC 19707 / BCRC 17464 / JCM 30415 / NCIMB 11848 / C-107) protein is S-adenosylmethionine synthase.